The primary structure comprises 563 residues: Arginine--tRNA ligase (563 aa).

A 'HIGH' region motif is present at residues 121–131 (PNIAKPFSIGH).

Belongs to the class-I aminoacyl-tRNA synthetase family. In terms of assembly, monomer.

It is found in the cytoplasm. It catalyses the reaction tRNA(Arg) + L-arginine + ATP = L-arginyl-tRNA(Arg) + AMP + diphosphate. The protein is Arginine--tRNA ligase of Streptococcus pyogenes serotype M4 (strain MGAS10750).